An 89-amino-acid chain; its full sequence is uncharacterized protein (89 aa).

This is an uncharacterized protein from Escherichia coli (Bacteriophage T4).